Consider the following 103-residue polypeptide: Urease subunit beta (103 aa).

This sequence belongs to the urease beta subunit family. As to quaternary structure, heterotrimer of UreA (gamma), UreB (beta) and UreC (alpha) subunits. Three heterotrimers associate to form the active enzyme.

The protein resides in the cytoplasm. It carries out the reaction urea + 2 H2O + H(+) = hydrogencarbonate + 2 NH4(+). Its pathway is nitrogen metabolism; urea degradation; CO(2) and NH(3) from urea (urease route): step 1/1. Functionally, ureolysis may allow urea to be employed as a nitrogen source for growth and produces ammonia which may protect from killing at low pH. The polypeptide is Urease subunit beta (Streptococcus salivarius (strain 57.I)).